A 138-amino-acid polypeptide reads, in one-letter code: Basic phospholipase A2 homolog G6K49 (138 aa).

Residues 1-16 form the signal peptide; that stretch reads MRTLWIMAVLLLGVEG. 7 disulfide bridges follow: C42–C132, C44–C60, C59–C112, C65–C138, C66–C105, C73–C98, and C91–C103. Positions 122–133 are important for membrane-damaging activities in eukaryotes and bacteria; heparin-binding; sequence KKHRVTVKFLCK.

It belongs to the phospholipase A2 family. Group II subfamily. K49 sub-subfamily. Homodimer; non-covalently linked. As to expression, expressed by the venom gland.

It localises to the secreted. In terms of biological role, snake venom phospholipase A2 (PLA2) that lacks enzymatic activity. Displays myotoxic activities. A model of myotoxic mechanism has been proposed: an apo Lys49-PLA2 is activated by the entrance of a hydrophobic molecule (e.g. fatty acid) at the hydrophobic channel of the protein leading to a reorientation of a monomer. This reorientation causes a transition between 'inactive' to 'active' states, causing alignment of C-terminal and membrane-docking sites (MDoS) side-by-side and putting the membrane-disruption sites (MDiS) in the same plane, exposed to solvent and in a symmetric position for both monomers. The MDoS region stabilizes the toxin on membrane by the interaction of charged residues with phospholipid head groups. Subsequently, the MDiS region destabilizes the membrane with penetration of hydrophobic residues. This insertion causes a disorganization of the membrane, allowing an uncontrolled influx of ions (i.e. calcium and sodium), and eventually triggering irreversible intracellular alterations and cell death. This Calloselasma rhodostoma (Malayan pit viper) protein is Basic phospholipase A2 homolog G6K49.